The chain runs to 239 residues: tRNA (guanine-N(1)-)-methyltransferase (239 aa).

S-adenosyl-L-methionine is bound by residues glycine 115 and 134 to 139; that span reads MGDFVL. The segment at 210 to 239 is disordered; the sequence is QQQREQRTQERRPDLWNRWQQIQNPTPPAP. Over residues 211-224 the composition is skewed to basic and acidic residues; that stretch reads QQREQRTQERRPDL.

This sequence belongs to the RNA methyltransferase TrmD family. Homodimer.

The protein resides in the cytoplasm. It carries out the reaction guanosine(37) in tRNA + S-adenosyl-L-methionine = N(1)-methylguanosine(37) in tRNA + S-adenosyl-L-homocysteine + H(+). Its function is as follows. Specifically methylates guanosine-37 in various tRNAs. The chain is tRNA (guanine-N(1)-)-methyltransferase from Synechococcus sp. (strain CC9311).